A 490-amino-acid polypeptide reads, in one-letter code: Probable glycine dehydrogenase (decarboxylating) subunit 2 (490 aa).

Position 273 is an N6-(pyridoxal phosphate)lysine (lysine 273).

It belongs to the GcvP family. C-terminal subunit subfamily. The glycine cleavage system is composed of four proteins: P, T, L and H. In this organism, the P 'protein' is a heterodimer of two subunits. Pyridoxal 5'-phosphate is required as a cofactor.

It carries out the reaction N(6)-[(R)-lipoyl]-L-lysyl-[glycine-cleavage complex H protein] + glycine + H(+) = N(6)-[(R)-S(8)-aminomethyldihydrolipoyl]-L-lysyl-[glycine-cleavage complex H protein] + CO2. In terms of biological role, the glycine cleavage system catalyzes the degradation of glycine. The P protein binds the alpha-amino group of glycine through its pyridoxal phosphate cofactor; CO(2) is released and the remaining methylamine moiety is then transferred to the lipoamide cofactor of the H protein. This Staphylococcus aureus (strain Newman) protein is Probable glycine dehydrogenase (decarboxylating) subunit 2.